The following is a 688-amino-acid chain: Elongation factor G (688 aa).

Residues 8-282 (EKTRNIGIMA…AIIDYLPSPM (275 aa)) form the tr-type G domain. Residues 17 to 24 (AHIDAGKT), 81 to 85 (DTPGH), and 135 to 138 (NKMD) each bind GTP.

Belongs to the TRAFAC class translation factor GTPase superfamily. Classic translation factor GTPase family. EF-G/EF-2 subfamily.

Its subcellular location is the cytoplasm. In terms of biological role, catalyzes the GTP-dependent ribosomal translocation step during translation elongation. During this step, the ribosome changes from the pre-translocational (PRE) to the post-translocational (POST) state as the newly formed A-site-bound peptidyl-tRNA and P-site-bound deacylated tRNA move to the P and E sites, respectively. Catalyzes the coordinated movement of the two tRNA molecules, the mRNA and conformational changes in the ribosome. This chain is Elongation factor G (fusA), found in Apple proliferation phytoplasma.